A 92-amino-acid chain; its full sequence is Small ribosomal subunit protein uS19 (92 aa).

Residues 73–92 are disordered; that stretch reads EFSPTRSFRGHAGAKNKGKK. The span at 80–92 shows a compositional bias: basic residues; the sequence is FRGHAGAKNKGKK.

Belongs to the universal ribosomal protein uS19 family.

Its function is as follows. Protein S19 forms a complex with S13 that binds strongly to the 16S ribosomal RNA. In Flavobacterium psychrophilum (strain ATCC 49511 / DSM 21280 / CIP 103535 / JIP02/86), this protein is Small ribosomal subunit protein uS19.